We begin with the raw amino-acid sequence, 876 residues long: MAP7 domain-containing protein 3 (876 aa).

Methionine 1 is subject to N-acetylmethionine. Residues 65–144 (NDIKQRLARE…DEAQKEKFTA (80 aa)) are a coiled coil. 2 disordered regions span residues 72-137 (ARER…KDEA) and 170-246 (AMAN…KPRV). The segment covering 171 to 183 (MANSESKTANKRS) has biased composition (polar residues). Serine 185 bears the Phosphoserine mark. Polar residues predominate over residues 191 to 211 (QGTSALIRQMPLSSAGLQNSV). The segment covering 214–244 (RKTDKERSSSLNRRDSNLHSSTDKEQAERKP) has biased composition (basic and acidic residues). At serine 322 the chain carries Phosphoserine. Residues 407–475 (EAAPEGSLEA…ARDAPKKSEM (69 aa)) form a disordered region. The segment covering 425–438 (APKESVKGSPKESM) has biased composition (basic and acidic residues). 3 positions are modified to phosphoserine: serine 441, serine 457, and serine 461. Over residues 465–475 (KARDAPKKSEM) the composition is skewed to basic and acidic residues. Serine 490 bears the Phosphoserine mark. 3 disordered regions span residues 509–533 (SPIS…SKQS), 613–697 (QREK…KKEH), and 723–754 (RKTD…SDKD). Residues 510–521 (PISTNRQIQKNC) are compositionally biased toward polar residues. Serine 524 carries the post-translational modification Phosphoserine. Coiled-coil stretches lie at residues 558–640 (VKKK…MAKE) and 689–724 (EADK…RTRK). Composition is skewed to basic and acidic residues over residues 613–639 (QREK…DMAK) and 680–697 (GDAK…KKEH). A compositionally biased stretch (acidic residues) spans 742–752 (EEAEADNEESD). A phosphoserine mark is found at serine 770 and serine 817. Positions 802–876 (PKTYFNGDLK…LPKSSDTFRQ (75 aa)) are disordered. A compositionally biased stretch (polar residues) spans 820 to 830 (DTSIQEVVSRP). The segment covering 831–842 (SSKRMTSHTTKT) has biased composition (basic residues). Residue serine 832 is modified to Phosphoserine. Polar residues predominate over residues 848–860 (TNTTSRSSAQTKS). The span at 861-876 (EGFHDILPKSSDTFRQ) shows a compositional bias: basic and acidic residues.

It belongs to the MAP7 family. Interacts (via N-terminus coiled coil domains) with tubulin and microtubules.

It is found in the cytoplasm. Its subcellular location is the cytoskeleton. The protein resides in the spindle. In terms of biological role, promotes the assembly and stability of microtubules. The sequence is that of MAP7 domain-containing protein 3 (MAP7D3) from Homo sapiens (Human).